Reading from the N-terminus, the 210-residue chain is Casparian strip membrane protein 1 (210 aa).

The disordered stretch occupies residues 1–25 (MEKSEATTIDVAETSRESKGKAPLL). Over 1-48 (MEKSEATTIDVAETSRESKGKAPLLRDPPAWVPAAVERQRAAPAYKRG) the chain is Cytoplasmic. Residues 49-69 (VAIFDLILRISAATAALAATI) traverse the membrane as a helical segment. The Extracellular portion of the chain corresponds to 70–98 (TMGTTEQTLPFFTQFFQFQASYDDLPTFT). The chain crosses the membrane as a helical span at residues 99 to 119 (FFVIAMSIVTGYLVLSVPFSI). Over 120 to 138 (VCIARPVAAAPRLLLILCD) the chain is Cytoplasmic. The chain crosses the membrane as a helical span at residues 139 to 159 (TLAVTLNTSAAGASAAIVYLA). Residues 160–183 (HNGNSDANWLAICQQFNDFCQRTS) lie on the Extracellular side of the membrane. A helical transmembrane segment spans residues 184 to 204 (GAVVASFVAVVLLIFLVVLSA). Residues 205-210 (SALKKH) are Cytoplasmic-facing.

This sequence belongs to the Casparian strip membrane proteins (CASP) family. Homodimer and heterodimers.

It localises to the cell membrane. Its function is as follows. Regulates membrane-cell wall junctions and localized cell wall deposition. Required for establishment of the Casparian strip membrane domain (CSD) and the subsequent formation of Casparian strips, a cell wall modification of the root endodermis that determines an apoplastic barrier between the intraorganismal apoplasm and the extraorganismal apoplasm and prevents lateral diffusion. This Erythranthe guttata (Yellow monkey flower) protein is Casparian strip membrane protein 1.